The sequence spans 94 residues: Co-chaperonin GroES (94 aa).

It belongs to the GroES chaperonin family. As to quaternary structure, heptamer of 7 subunits arranged in a ring. Interacts with the chaperonin GroEL.

It localises to the cytoplasm. Its function is as follows. Together with the chaperonin GroEL, plays an essential role in assisting protein folding. The GroEL-GroES system forms a nano-cage that allows encapsulation of the non-native substrate proteins and provides a physical environment optimized to promote and accelerate protein folding. GroES binds to the apical surface of the GroEL ring, thereby capping the opening of the GroEL channel. The sequence is that of Co-chaperonin GroES from Ehrlichia chaffeensis (strain ATCC CRL-10679 / Arkansas).